A 503-amino-acid chain; its full sequence is Apolipoprotein N-acyltransferase (503 aa).

A run of 7 helical transmembrane segments spans residues 13 to 32 (RWRGLVSLFLSVLSGFLTAL), 34 to 54 (MPGFLSGALIWFSLIPLLYAV), 63 to 83 (AFLSFVYFFTHVLISFFWVLP), 102 to 122 (IVVFVLMGIIEAVPFLGFGFL), 124 to 144 (YFAPQSIVLKTLYLASVYTIF), 173 to 193 (IVSITGTLGLVFLIVSLNVLF), and 203 to 223 (LLIFPVIFFVYLLNSSVVHLL). One can recognise a CN hydrolase domain in the interval 231–460 (FKVVALQPNV…RLAGEFHIKA (230 aa)). Glu-273 (proton acceptor) is an active-site residue. Lys-321 is a catalytic residue. Residue Cys-371 is the Nucleophile of the active site. Residues 468–488 (VRYGDWFFYLSVILAVVSVFI) traverse the membrane as a helical segment.

This sequence belongs to the CN hydrolase family. Apolipoprotein N-acyltransferase subfamily.

It localises to the cell inner membrane. The enzyme catalyses N-terminal S-1,2-diacyl-sn-glyceryl-L-cysteinyl-[lipoprotein] + a glycerophospholipid = N-acyl-S-1,2-diacyl-sn-glyceryl-L-cysteinyl-[lipoprotein] + a 2-acyl-sn-glycero-3-phospholipid + H(+). Its pathway is protein modification; lipoprotein biosynthesis (N-acyl transfer). Functionally, catalyzes the phospholipid dependent N-acylation of the N-terminal cysteine of apolipoprotein, the last step in lipoprotein maturation. This chain is Apolipoprotein N-acyltransferase, found in Thermotoga maritima (strain ATCC 43589 / DSM 3109 / JCM 10099 / NBRC 100826 / MSB8).